Consider the following 573-residue polypeptide: Putative ferric-chelate reductase 1 (573 aa).

A helical membrane pass occupies residues 4 to 24 (VCKSPQRLLFVLVSCFGLVQS). The Reelin domain occupies 15 to 181 (LVSCFGLVQS…GTTGTSTTPA (167 aa)). The 116-residue stretch at 213–328 (GCYFVAVQAS…NEYYLMIAAG (116 aa)) folds into the DOMON domain. N-linked (GlcNAc...) asparagine glycans are attached at residues N286 and N300. Residues 332–532 (QGNIQFHTNK…YILQDLNLRA (201 aa)) form the Cytochrome b561 domain. A helical transmembrane segment spans residues 369–389 (AHGCLMLISWMATGSIGMIIA). H370 and H411 together coordinate heme b. The next 2 helical transmembrane spans lie at 414–434 (LMTLSIIATAIAFIIVFVSAG) and 441–461 (HPVLGCLVMILSLIQPIVAAF). The heme b site is built by H441 and H477. Transmembrane regions (helical) follow at residues 479–499 (CNAFAIKCLAVAAIFTGLALF), 506–526 (GWMLKVMGGYLAWEALMYILQ), and 550–570 (ILLFLFIIGNLAFLIALLVGI).

The protein belongs to the FRRS1 family. The cofactor is heme b.

The protein resides in the membrane. Its function is as follows. Putative ferric-chelate reductases reduce Fe(3+) to Fe(2+) before its transport from the endosome to the cytoplasm. The chain is Putative ferric-chelate reductase 1 (frrs1) from Danio rerio (Zebrafish).